Here is a 138-residue protein sequence, read N- to C-terminus: Phosphoribosyl-AMP cyclohydrolase (138 aa).

Asp-84 serves as a coordination point for Mg(2+). Cys-85 is a Zn(2+) binding site. Positions 86 and 88 each coordinate Mg(2+). Cys-102 and Cys-109 together coordinate Zn(2+).

Belongs to the PRA-CH family. As to quaternary structure, homodimer. Requires Mg(2+) as cofactor. Zn(2+) serves as cofactor.

Its subcellular location is the cytoplasm. It catalyses the reaction 1-(5-phospho-beta-D-ribosyl)-5'-AMP + H2O = 1-(5-phospho-beta-D-ribosyl)-5-[(5-phospho-beta-D-ribosylamino)methylideneamino]imidazole-4-carboxamide. Its pathway is amino-acid biosynthesis; L-histidine biosynthesis; L-histidine from 5-phospho-alpha-D-ribose 1-diphosphate: step 3/9. In terms of biological role, catalyzes the hydrolysis of the adenine ring of phosphoribosyl-AMP. This Burkholderia multivorans (strain ATCC 17616 / 249) protein is Phosphoribosyl-AMP cyclohydrolase.